The primary structure comprises 290 residues: 4-hydroxy-tetrahydrodipicolinate synthase (290 aa).

T44 serves as a coordination point for pyruvate. Y132 serves as the catalytic Proton donor/acceptor. K160 acts as the Schiff-base intermediate with substrate in catalysis. Position 202 (I202) interacts with pyruvate.

Belongs to the DapA family. In terms of assembly, homotetramer; dimer of dimers.

It is found in the cytoplasm. The catalysed reaction is L-aspartate 4-semialdehyde + pyruvate = (2S,4S)-4-hydroxy-2,3,4,5-tetrahydrodipicolinate + H2O + H(+). It functions in the pathway amino-acid biosynthesis; L-lysine biosynthesis via DAP pathway; (S)-tetrahydrodipicolinate from L-aspartate: step 3/4. Catalyzes the condensation of (S)-aspartate-beta-semialdehyde [(S)-ASA] and pyruvate to 4-hydroxy-tetrahydrodipicolinate (HTPA). This chain is 4-hydroxy-tetrahydrodipicolinate synthase, found in Citrifermentans bemidjiense (strain ATCC BAA-1014 / DSM 16622 / JCM 12645 / Bem) (Geobacter bemidjiensis).